The sequence spans 400 residues: Nicotinate phosphoribosyltransferase (400 aa).

Phosphohistidine; by autocatalysis is present on His220.

This sequence belongs to the NAPRTase family. In terms of processing, transiently phosphorylated on a His residue during the reaction cycle. Phosphorylation strongly increases the affinity for substrates and increases the rate of nicotinate D-ribonucleotide production. Dephosphorylation regenerates the low-affinity form of the enzyme, leading to product release.

The catalysed reaction is nicotinate + 5-phospho-alpha-D-ribose 1-diphosphate + ATP + H2O = nicotinate beta-D-ribonucleotide + ADP + phosphate + diphosphate. It functions in the pathway cofactor biosynthesis; NAD(+) biosynthesis; nicotinate D-ribonucleotide from nicotinate: step 1/1. In terms of biological role, catalyzes the synthesis of beta-nicotinate D-ribonucleotide from nicotinate and 5-phospho-D-ribose 1-phosphate at the expense of ATP. This is Nicotinate phosphoribosyltransferase from Salmonella newport (strain SL254).